A 47-amino-acid chain; its full sequence is NADH dehydrogenase [ubiquinone] iron-sulfur protein 2 (47 aa).

This sequence belongs to the complex I 49 kDa subunit family. As to quaternary structure, complex I is composed of about 45 different subunits. This is a component of the iron-sulfur (IP) fragment of the enzyme.

Its subcellular location is the mitochondrion inner membrane. The catalysed reaction is a ubiquinone + NADH + 5 H(+)(in) = a ubiquinol + NAD(+) + 4 H(+)(out). Core subunit of the mitochondrial membrane respiratory chain NADH dehydrogenase (Complex I) that is believed to belong to the minimal assembly required for catalysis. Complex I functions in the transfer of electrons from NADH to the respiratory chain. The immediate electron acceptor for the enzyme is believed to be ubiquinone. Component of the iron-sulfur (IP) fragment of the enzyme. The polypeptide is NADH dehydrogenase [ubiquinone] iron-sulfur protein 2 (NAD7) (Solanum tuberosum (Potato)).